The sequence spans 786 residues: Ciliated left-right organizer ZP-N domains-containing protein (786 aa).

The first 18 residues, 1-18, serve as a signal peptide directing secretion; sequence MWGSVAVVWAICLACIQP.

Expressed specifically by cells of the ciliated left-right organizer.

Its function is as follows. Plays a role in left-right patterning process. The protein is Ciliated left-right organizer ZP-N domains-containing protein (Ciroz) of Mus musculus (Mouse).